A 213-amino-acid chain; its full sequence is Uridine kinase (213 aa).

Glycine 13–serine 20 contacts ATP.

Belongs to the uridine kinase family.

The protein resides in the cytoplasm. The catalysed reaction is uridine + ATP = UMP + ADP + H(+). It catalyses the reaction cytidine + ATP = CMP + ADP + H(+). It functions in the pathway pyrimidine metabolism; CTP biosynthesis via salvage pathway; CTP from cytidine: step 1/3. The protein operates within pyrimidine metabolism; UMP biosynthesis via salvage pathway; UMP from uridine: step 1/1. The polypeptide is Uridine kinase (Haemophilus influenzae (strain PittGG)).